Consider the following 797-residue polypeptide: Outer membrane protein assembly factor BamA (797 aa).

The N-terminal stretch at Met-1 to Ala-21 is a signal peptide. POTRA domains follow at residues Phe-23–Arg-90, Pro-91–Gly-171, Ala-174–Gly-262, Phe-265–Gly-344, and Ile-347–Arg-421.

It belongs to the BamA family. In terms of assembly, part of the Bam complex.

It is found in the cell outer membrane. Functionally, part of the outer membrane protein assembly complex, which is involved in assembly and insertion of beta-barrel proteins into the outer membrane. This chain is Outer membrane protein assembly factor BamA, found in Neisseria meningitidis serogroup B (strain ATCC BAA-335 / MC58).